The chain runs to 547 residues: Chaperonin GroEL (547 aa).

Residues 30 to 33 (TLGP), Lys-51, 87 to 91 (DGTTT), Gly-415, and Asp-495 each bind ATP.

It belongs to the chaperonin (HSP60) family. As to quaternary structure, forms a cylinder of 14 subunits composed of two heptameric rings stacked back-to-back. Interacts with the co-chaperonin GroES.

It localises to the cytoplasm. The enzyme catalyses ATP + H2O + a folded polypeptide = ADP + phosphate + an unfolded polypeptide.. In terms of biological role, together with its co-chaperonin GroES, plays an essential role in assisting protein folding. The GroEL-GroES system forms a nano-cage that allows encapsulation of the non-native substrate proteins and provides a physical environment optimized to promote and accelerate protein folding. This chain is Chaperonin GroEL, found in Shewanella pealeana (strain ATCC 700345 / ANG-SQ1).